We begin with the raw amino-acid sequence, 156 residues long: RING finger protein 224 (156 aa).

The RING-type zinc-finger motif lies at 23–70 (CIICYSAYDLSVHLPRRLYCGHTFCQACMQRLDMPAHEQHWIPCPQCR).

This is RING finger protein 224 (Rnf224) from Mus musculus (Mouse).